Consider the following 334-residue polypeptide: Mevalonate kinase (334 aa).

110–120 (PVGAGLGSSAA) contacts ATP. The active-site Proton acceptor is Asp161.

Belongs to the GHMP kinase family. Mevalonate kinase subfamily. As to quaternary structure, homodimer. Mg(2+) serves as cofactor.

The protein localises to the cytoplasm. It carries out the reaction (R)-mevalonate + ATP = (R)-5-phosphomevalonate + ADP + H(+). The protein operates within isoprenoid biosynthesis; isopentenyl diphosphate biosynthesis via mevalonate pathway; isopentenyl diphosphate from (R)-mevalonate: step 1/3. Catalyzes the phosphorylation of (R)-mevalonate (MVA) to (R)-mevalonate 5-phosphate (MVAP). Functions in the mevalonate (MVA) pathway leading to isopentenyl diphosphate (IPP), a key precursor for the biosynthesis of isoprenoid compounds such as archaeal membrane lipids. The polypeptide is Mevalonate kinase (Thermococcus gammatolerans (strain DSM 15229 / JCM 11827 / EJ3)).